The following is a 148-amino-acid chain: Large ribosomal subunit protein bL9 (148 aa).

The protein belongs to the bacterial ribosomal protein bL9 family.

In terms of biological role, binds to the 23S rRNA. This is Large ribosomal subunit protein bL9 from Thermus thermophilus (strain ATCC BAA-163 / DSM 7039 / HB27).